Consider the following 346-residue polypeptide: NADH-ubiquinone oxidoreductase chain 2 (346 aa).

10 helical membrane passes run 25-45 (HWIL…PLIS), 52-72 (AIEA…LILF), 95-115 (CLIL…HFWF), 124-144 (LITA…LLLM), 149-169 (LNPA…GWMG), 178-196 (ILAF…IIIY), 200-219 (LTIL…FLSL), 247-267 (TLLS…WLII), 274-294 (EMTP…FFYL), and 326-346 (AILT…TTLV).

This sequence belongs to the complex I subunit 2 family.

Its subcellular location is the mitochondrion inner membrane. It carries out the reaction a ubiquinone + NADH + 5 H(+)(in) = a ubiquinol + NAD(+) + 4 H(+)(out). In terms of biological role, core subunit of the mitochondrial membrane respiratory chain NADH dehydrogenase (Complex I) that is believed to belong to the minimal assembly required for catalysis. Complex I functions in the transfer of electrons from NADH to the respiratory chain. The immediate electron acceptor for the enzyme is believed to be ubiquinone. The protein is NADH-ubiquinone oxidoreductase chain 2 (MT-ND2) of Coturnix japonica (Japanese quail).